Reading from the N-terminus, the 556-residue chain is Valencene synthase (556 aa).

Residues 1-12 (MSTQVSASSLAQ) show a composition bias toward polar residues. Positions 1–24 (MSTQVSASSLAQIPQPKNRPVANF) are disordered. Residues aspartate 310, aspartate 314, and glutamate 462 each coordinate Mg(2+). Residues 310 to 314 (DDIHD) carry the DDXXD motif motif.

It belongs to the terpene synthase family. Tpsa subfamily. Mg(2+) is required as a cofactor. As to expression, expressed in flowers and anthers. Detected inside the pollen grains, but not in stems, leaves, tendrils, roots, seeds, pistils or caps.

It is found in the cytoplasm. It catalyses the reaction (2E,6E)-farnesyl diphosphate = (+)-valencene + diphosphate. The catalysed reaction is (2E,6E)-farnesyl diphosphate = (-)-7-epi-alpha-selinene + diphosphate. The protein operates within secondary metabolite biosynthesis; terpenoid biosynthesis. Its function is as follows. Involved in the biosynthesis of valencene, a major volatile emitted from flowers of grapevine. Can use farnesyl diphosphate as substrate, but not geranyl diphosphate or geranylgeranyl diphosphate. Produces mainly (+)-valencene and (-)-7-epi-alpha-selinene along with five minor products. This is Valencene synthase (ValCS) from Vitis vinifera (Grape).